The following is a 188-amino-acid chain: Elongation factor P-like protein (188 aa).

Belongs to the elongation factor P family.

The protein is Elongation factor P-like protein of Aliivibrio fischeri (strain ATCC 700601 / ES114) (Vibrio fischeri).